Here is a 415-residue protein sequence, read N- to C-terminus: Serine hydroxymethyltransferase (415 aa).

Residues Leu119 and 123–125 (GHL) contribute to the (6S)-5,6,7,8-tetrahydrofolate site. Lys228 is modified (N6-(pyridoxal phosphate)lysine). 353 to 355 (SPF) serves as a coordination point for (6S)-5,6,7,8-tetrahydrofolate.

It belongs to the SHMT family. In terms of assembly, homodimer. The cofactor is pyridoxal 5'-phosphate.

Its subcellular location is the cytoplasm. It catalyses the reaction (6R)-5,10-methylene-5,6,7,8-tetrahydrofolate + glycine + H2O = (6S)-5,6,7,8-tetrahydrofolate + L-serine. It functions in the pathway one-carbon metabolism; tetrahydrofolate interconversion. It participates in amino-acid biosynthesis; glycine biosynthesis; glycine from L-serine: step 1/1. In terms of biological role, catalyzes the reversible interconversion of serine and glycine with tetrahydrofolate (THF) serving as the one-carbon carrier. Also exhibits THF-independent aldolase activity toward beta-hydroxyamino acids, producing glycine and aldehydes, via a retro-aldol mechanism. This is Serine hydroxymethyltransferase from Halorubrum lacusprofundi (strain ATCC 49239 / DSM 5036 / JCM 8891 / ACAM 34).